A 478-amino-acid chain; its full sequence is Zinc metalloproteinase/disintegrin (478 aa).

The signal sequence occupies residues 1 to 20; sequence MIQVLLVTICLAAFPYQGSS. The propeptide occupies 21-188; it reads IILESGNVND…PIKKVSQLNL (168 aa). Positions 194–391 constitute a Peptidase M12B domain; that stretch reads RHVDIVVVVD…QNPQCILNKP (198 aa). An intrachain disulfide couples Cys207 to Cys248. N-linked (GlcNAc...) (complex) asparagine glycosylation is present at Asn279. 3 disulfides stabilise this stretch: Cys305–Cys386, Cys345–Cys370, and Cys347–Cys353. Position 330 (His330) interacts with Zn(2+). Glu331 is a catalytic residue. The Zn(2+) site is built by His334 and His340. Asn369 carries an N-linked (GlcNAc...) (complex) asparagine glycan. Positions 392-407 are excised as a propeptide; that stretch reads LRTVSIPVSGNEHLEA. The Disintegrin domain occupies 397–478; it reads IPVSGNEHLE…ADCPRYHSHA (82 aa). Cystine bridges form between Cys411/Cys426, Cys413/Cys421, Cys420/Cys443, Cys434/Cys440, Cys439/Cys464, and Cys452/Cys471. Residues 456-458 carry the Cell attachment site motif; the sequence is RGD. A propeptide spanning residues 476 to 478 is cleaved from the precursor; that stretch reads SHA.

This sequence belongs to the venom metalloproteinase (M12B) family. P-II subfamily. P-IIa sub-subfamily. As to quaternary structure, monomeric (disintegrin). Requires Zn(2+) as cofactor. Post-translationally, glycans are composed of 4 GlcNAc, 3 Man, 2 Gal, 2 NeuAC and 1 Fuc residue. Expressed by the venom gland.

It localises to the secreted. Functionally, impairs hemostasis in the envenomed animal. In terms of biological role, inhibits platelet aggregation induced by ADP, thrombin, platelet-activating factor and collagen. Acts by inhibiting fibrinogen interaction with platelet receptors alpha-IIb/beta-3 (ITGA2B/ITGB3). The polypeptide is Zinc metalloproteinase/disintegrin (Calloselasma rhodostoma (Malayan pit viper)).